Reading from the N-terminus, the 632-residue chain is MLLTAPSSRGSRTQSGIANVSWWALSLLLLFSPTLVSAKSAADYYVRSLPGAPEGPLLKMHAGHIEVDAQNNGNLFFWHYQNRHIANRQRTVIWLNGGPGCSSMDGALMEIGPYRLKDNHTLEYNNGSWDEFANLLFVDQPVGTGFSYVSTNSYIHELDEMSAQFITFLEKWFQLFPEYEGDDIYIAGESYAGQHIPYIAKAIQERNNKIQNDQSVRWNLRGIVIGNGWISPAQQYPSYLTFAYEEGLVTEGSSLAKDLEVYQSVCESKISASPNAINIRDCEEILQQILARTKDTNRQCYNMYDVRLRDTYPSCGMNWPTDLVDVKPYLQRPDVVQALNINPEKKSGWEECSGAVSSTFNAANSLPSVQLLPELLESGIPILLFSGDKDLICNHVGTEQLINNMKWNGGTGFETSPGVWAPRHDWTFEGEPTGIYQYARNLTYVLFYNASHMVPYDLPRQSRDMLDRFMKVDIANIGGKPADSRIDGEKLPQTSVGGHPNSTAAEQQAKEKIKETEWKAYAKSGEAALIVVIIGVTVWGFFIWRSRRRNRGYQGVYQRDVGSGSILERFHNKRSGPADVEAGDFDESELDNLHSPGPEQEHYAVGDDSDEEGPNHHPAAPPSSTKPGGAQP.

Positions 1–38 (MLLTAPSSRGSRTQSGIANVSWWALSLLLLFSPTLVSA) are cleaved as a signal peptide. At 39-523 (KSAADYYVRS…KETEWKAYAK (485 aa)) the chain is on the lumenal side. Asn-119 and Asn-126 each carry an N-linked (GlcNAc...) asparagine glycan. Catalysis depends on residues Ser-190 and Asp-390. Residues Asn-441 and Asn-449 are each glycosylated (N-linked (GlcNAc...) asparagine). The active site involves His-452. Residues 480–507 (KPADSRIDGEKLPQTSVGGHPNSTAAEQ) are disordered. The segment covering 492 to 506 (PQTSVGGHPNSTAAE) has biased composition (polar residues). Residue Asn-501 is glycosylated (N-linked (GlcNAc...) asparagine). A helical transmembrane segment spans residues 524 to 544 (SGEAALIVVIIGVTVWGFFIW). Residues 545-632 (RSRRRNRGYQ…SSTKPGGAQP (88 aa)) lie on the Cytoplasmic side of the membrane. The disordered stretch occupies residues 568-632 (ERFHNKRSGP…SSTKPGGAQP (65 aa)). Residues 581–590 (EAGDFDESEL) are compositionally biased toward acidic residues.

Belongs to the peptidase S10 family.

It is found in the golgi apparatus. Its subcellular location is the trans-Golgi network membrane. The catalysed reaction is Preferential release of a C-terminal arginine or lysine residue.. Functionally, protease with a carboxypeptidase B-like function involved in the C-terminal processing of the lysine and arginine residues from protein precursors. Promotes cell fusion and is involved in the programmed cell death. This Neosartorya fischeri (strain ATCC 1020 / DSM 3700 / CBS 544.65 / FGSC A1164 / JCM 1740 / NRRL 181 / WB 181) (Aspergillus fischerianus) protein is Pheromone-processing carboxypeptidase kex1 (kex1).